Here is a 289-residue protein sequence, read N- to C-terminus: Rhodopsin (289 aa).

The Extracellular portion of the chain corresponds to 1 to 7; sequence YLVNPAA. The chain crosses the membrane as a helical span at residues 8–32; it reads YAALGAYMFLLILIGFPVNFLTLYV. The Cytoplasmic portion of the chain corresponds to 33–44; that stretch reads TLEHKKLRTPLN. The chain crosses the membrane as a helical span at residues 45–67; that stretch reads YILLNLAVADLFMVLGGFTTTMY. At 68–81 the chain is on the extracellular side; it reads TSMHGYFVLGRLGC. A disulfide bond links Cys81 and Cys158. The chain crosses the membrane as a helical span at residues 82–104; that stretch reads NLEGFFATLGGEIALWSLVVLAI. Positions 105 to 107 match the 'Ionic lock' involved in activated form stabilization motif; that stretch reads ERW. Residues 105–123 are Cytoplasmic-facing; that stretch reads ERWIVVCKPISNFRFTEDH. A helical transmembrane segment spans residues 124-144; it reads AIMGLAFSWVMALSCSVPPLV. Residues 145 to 173 lie on the Extracellular side of the membrane; that stretch reads GWSRYIPEAMQCSCGVDYYTRAEGFNTES. The chain crosses the membrane as a helical span at residues 174–195; it reads FVLYMFTVHFLIPLSVIFFCYG. The Cytoplasmic portion of the chain corresponds to 196 to 223; it reads RLLCAVKEAAAAQQESETTQRSEKEVSR. The chain crosses the membrane as a helical span at residues 224–245; sequence MVVLMVIGFLVCWLPYASTAWW. The Extracellular segment spans residues 246-257; that stretch reads IFCNQGSEFGPV. A helical transmembrane segment spans residues 258–279; that stretch reads FMTIPAFFAKSSAIYNPMIYIC. Lys267 carries the N6-(retinylidene)lysine modification. Topologically, residues 280–289 are cytoplasmic; that stretch reads MNKQFRHCMI.

The protein belongs to the G-protein coupled receptor 1 family. Opsin subfamily. Phosphorylated on some or all of the serine and threonine residues present in the C-terminal region. Post-translationally, contains one covalently linked retinal chromophore.

It localises to the membrane. Its subcellular location is the cell projection. It is found in the cilium. The protein resides in the photoreceptor outer segment. Photoreceptor required for image-forming vision at low light intensity. While most salt water fish species use retinal as chromophore, most freshwater fish use 3-dehydroretinal, or a mixture of retinal and 3-dehydroretinal. Light-induced isomerization of 11-cis to all-trans retinal triggers a conformational change that activates signaling via G-proteins. Subsequent receptor phosphorylation mediates displacement of the bound G-protein alpha subunit by arrestin and terminates signaling. In Comephorus dybowskii, this protein is Rhodopsin (rho).